The primary structure comprises 128 residues: uncharacterized protein (128 aa).

A run of 2 helical transmembrane segments spans residues G45 to F65 and F95 to F115.

The protein resides in the membrane. This is an uncharacterized protein from Saccharomyces cerevisiae (strain ATCC 204508 / S288c) (Baker's yeast).